Here is a 481-residue protein sequence, read N- to C-terminus: Probable glycine dehydrogenase (decarboxylating) subunit 2 (481 aa).

K265 is subject to N6-(pyridoxal phosphate)lysine.

It belongs to the GcvP family. C-terminal subunit subfamily. The glycine cleavage system is composed of four proteins: P, T, L and H. In this organism, the P 'protein' is a heterodimer of two subunits. Pyridoxal 5'-phosphate is required as a cofactor.

The catalysed reaction is N(6)-[(R)-lipoyl]-L-lysyl-[glycine-cleavage complex H protein] + glycine + H(+) = N(6)-[(R)-S(8)-aminomethyldihydrolipoyl]-L-lysyl-[glycine-cleavage complex H protein] + CO2. In terms of biological role, the glycine cleavage system catalyzes the degradation of glycine. The P protein binds the alpha-amino group of glycine through its pyridoxal phosphate cofactor; CO(2) is released and the remaining methylamine moiety is then transferred to the lipoamide cofactor of the H protein. This Thermosipho melanesiensis (strain DSM 12029 / CIP 104789 / BI429) protein is Probable glycine dehydrogenase (decarboxylating) subunit 2.